The sequence spans 453 residues: GTPase Der (453 aa).

2 EngA-type G domains span residues 3–167 (FTLA…PAQT) and 187–360 (IKVA…AVWN). GTP contacts are provided by residues 9–16 (GRPNVGKS), 56–60 (DTAGL), 119–122 (NKSE), 193–200 (GRPNAGKS), 240–244 (DTAGL), and 305–308 (NKSD). Residues 361–445 (TRIPTNPLNR…PIRLTLREKG (85 aa)) form the KH-like domain.

It belongs to the TRAFAC class TrmE-Era-EngA-EngB-Septin-like GTPase superfamily. EngA (Der) GTPase family. Associates with the 50S ribosomal subunit.

GTPase that plays an essential role in the late steps of ribosome biogenesis. This is GTPase Der from Azorhizobium caulinodans (strain ATCC 43989 / DSM 5975 / JCM 20966 / LMG 6465 / NBRC 14845 / NCIMB 13405 / ORS 571).